The sequence spans 442 residues: tRNA modification GTPase MnmE (442 aa).

(6S)-5-formyl-5,6,7,8-tetrahydrofolate contacts are provided by arginine 22, glutamate 79, and lysine 119. The TrmE-type G domain occupies 216 to 366 (GIKTCLVGAP…LLEKIKSIFA (151 aa)). Position 226 (asparagine 226) interacts with K(+). GTP-binding positions include 226 to 231 (NSGKSS), 245 to 251 (SEIPGTT), and 270 to 273 (DTAG). Serine 230 contributes to the Mg(2+) binding site. Serine 245, isoleucine 247, and threonine 250 together coordinate K(+). Position 251 (threonine 251) interacts with Mg(2+). Lysine 442 contacts (6S)-5-formyl-5,6,7,8-tetrahydrofolate.

This sequence belongs to the TRAFAC class TrmE-Era-EngA-EngB-Septin-like GTPase superfamily. TrmE GTPase family. As to quaternary structure, homodimer. Heterotetramer of two MnmE and two MnmG subunits. The cofactor is K(+).

Its subcellular location is the cytoplasm. Functionally, exhibits a very high intrinsic GTPase hydrolysis rate. Involved in the addition of a carboxymethylaminomethyl (cmnm) group at the wobble position (U34) of certain tRNAs, forming tRNA-cmnm(5)s(2)U34. This Mesomycoplasma hyopneumoniae (strain J / ATCC 25934 / NCTC 10110) (Mycoplasma hyopneumoniae) protein is tRNA modification GTPase MnmE.